The following is a 238-amino-acid chain: Purine nucleoside phosphorylase DeoD-type (238 aa).

His-4 contributes to the a purine D-ribonucleoside binding site. Phosphate-binding positions include Gly-20, Arg-24, Arg-43, and 87 to 90 (RVGS). A purine D-ribonucleoside contacts are provided by residues 179-181 (EME) and 203-204 (SD). The active-site Proton donor is Asp-204.

Belongs to the PNP/UDP phosphorylase family. In terms of assembly, homohexamer; trimer of homodimers.

It carries out the reaction a purine D-ribonucleoside + phosphate = a purine nucleobase + alpha-D-ribose 1-phosphate. The enzyme catalyses a purine 2'-deoxy-D-ribonucleoside + phosphate = a purine nucleobase + 2-deoxy-alpha-D-ribose 1-phosphate. In terms of biological role, catalyzes the reversible phosphorolytic breakdown of the N-glycosidic bond in the beta-(deoxy)ribonucleoside molecules, with the formation of the corresponding free purine bases and pentose-1-phosphate. This chain is Purine nucleoside phosphorylase DeoD-type, found in Haemophilus influenzae (strain PittGG).